The primary structure comprises 877 residues: GPI ethanolamine phosphate transferase 2 (877 aa).

N190 and N368 each carry an N-linked (GlcNAc...) asparagine glycan. Transmembrane regions (helical) follow at residues 409-429, 443-463, 464-484, 528-548, and 570-590; these read VDIYIGLSILVAMAIVAFGLF, YNWYFIGISIVYSIHFHASSL, IEEEYQIWWFFSIICLFALYF, VDLLWVLNIATYFLTAILIYS, and DFGSLVTFIVTFVTCSISFSF. N611 is a glycosylation site (N-linked (GlcNAc...) asparagine). The next 6 membrane-spanning stretches (helical) occupy residues 634 to 654, 683 to 703, 716 to 736, 758 to 778, 817 to 837, and 854 to 876; these read IHLSKILFYCIGVLIIVRIVL, EIVPIFLIFSLVKFSAAKLLA, LMIIITLFSLCMQNLSFFSMG, VFLVGVLTYCSNFAGPIFWSL, LAGFLFYSMAGLSLVASCFNL, and FASWTLLTNILIDTISSLSILAL.

It belongs to the PIGG/PIGN/PIGO family. PIGG subfamily.

It is found in the endoplasmic reticulum membrane. The protein operates within glycolipid biosynthesis; glycosylphosphatidylinositol-anchor biosynthesis. Its function is as follows. Ethanolamine phosphate transferase involved in glycosylphosphatidylinositol-anchor biosynthesis. Transfers ethanolamine phosphate to the GPI second mannose. The polypeptide is GPI ethanolamine phosphate transferase 2 (LAS21) (Debaryomyces hansenii (strain ATCC 36239 / CBS 767 / BCRC 21394 / JCM 1990 / NBRC 0083 / IGC 2968) (Yeast)).